A 720-amino-acid chain; its full sequence is Putative fatty acid oxidation complex trifunctional enzyme (720 aa).

The tract at residues 1-384 (MQNEIKKVCV…SWKYGPFELL (384 aa)) is 3-hydroxyacyl-CoA dehydrogenase. Residues 453–720 (FVITTKMNCL…TIEKLKAIVK (268 aa)) form an enoyl-CoA hydratase/isomerase region.

This sequence in the N-terminal section; belongs to the 3-hydroxyacyl-CoA dehydrogenase family. In the C-terminal section; belongs to the enoyl-CoA hydratase/isomerase family.

It catalyses the reaction a (3S)-3-hydroxyacyl-CoA + NAD(+) = a 3-oxoacyl-CoA + NADH + H(+). The catalysed reaction is a (3S)-3-hydroxyacyl-CoA = a (2E)-enoyl-CoA + H2O. It carries out the reaction a 4-saturated-(3S)-3-hydroxyacyl-CoA = a (3E)-enoyl-CoA + H2O. The enzyme catalyses a (3Z)-enoyl-CoA = a 4-saturated (2E)-enoyl-CoA. It catalyses the reaction a (3E)-enoyl-CoA = a 4-saturated (2E)-enoyl-CoA. This Rickettsia felis (strain ATCC VR-1525 / URRWXCal2) (Rickettsia azadi) protein is Putative fatty acid oxidation complex trifunctional enzyme.